Here is a 128-residue protein sequence, read N- to C-terminus: MAFTGKYEIESEKNYDEFMKRLALPSDAIDKARNLKIISEVKQDGQNFTWSQQYPGGHSITNTFTIGKECDIETIGGKKFKATVQMEGGKVVVNSPNYHHTAEIVDGKLVEVSTVGGVTYERVSKKLA.

The residue at position 2 (alanine 2) is an N-acetylalanine.

It belongs to the calycin superfamily. Fatty-acid binding protein (FABP) family. In terms of tissue distribution, found exclusively in the ileum and to a lesser extent in distal jejunum.

Its subcellular location is the cytoplasm. The protein resides in the membrane. In terms of biological role, binds to bile acids and is involved in enterohepatic bile acid metabolism. Required for efficient apical to basolateral transport of conjugated bile acids in ileal enterocytes. Stimulates gastric acid and pepsinogen secretion. In Sus scrofa (Pig), this protein is Gastrotropin (FABP6).